The primary structure comprises 251 residues: CDP-diacylglycerol pyrophosphatase (251 aa).

The helical transmembrane segment at 4–24 (AGLLFLVMIVIAVVAAGIGYW) threads the bilayer.

Belongs to the Cdh family.

It is found in the cell inner membrane. The enzyme catalyses a CDP-1,2-diacyl-sn-glycerol + H2O = a 1,2-diacyl-sn-glycero-3-phosphate + CMP + 2 H(+). Its pathway is phospholipid metabolism; CDP-diacylglycerol degradation; phosphatidate from CDP-diacylglycerol: step 1/1. The polypeptide is CDP-diacylglycerol pyrophosphatase (Escherichia coli (strain SE11)).